We begin with the raw amino-acid sequence, 310 residues long: 4-hydroxyproline 2-epimerase (310 aa).

C88 functions as the Proton acceptor in the catalytic mechanism. Residues 89–90 (GH), H208, and D232 each bind substrate. The Proton donor role is filled by C236. Residue 237-238 (GT) participates in substrate binding.

The protein belongs to the proline racemase family.

The catalysed reaction is trans-4-hydroxy-L-proline = cis-4-hydroxy-D-proline. Catalyzes the epimerization of trans-4-hydroxy-L-proline (t4LHyp) to cis-4-hydroxy-D-proline (c4DHyp). Is likely involved in a degradation pathway that converts t4LHyp to alpha-ketoglutarate. Can also catalyze the dehydration of trans-3-hydroxy-L-proline (t3LHyp) to Delta(1)-pyrroline-2-carboxylate (Pyr2C), albeit with 42-fold lower efficiency. Displays no proline racemase activity. This chain is 4-hydroxyproline 2-epimerase, found in Burkholderia thailandensis (strain ATCC 700388 / DSM 13276 / CCUG 48851 / CIP 106301 / E264).